The chain runs to 449 residues: Cyclin-B1-5 (449 aa).

2 disordered regions span residues Met1 to Pro37 and Pro98 to Ala147. Composition is skewed to low complexity over residues Ala8–Pro37 and Ser136–Ala147.

It belongs to the cyclin family. Cyclin AB subfamily.

This is Cyclin-B1-5 (CYCB1-5) from Oryza sativa subsp. japonica (Rice).